The primary structure comprises 134 residues: uncharacterized protein (134 aa).

Belongs to the ycf68 family.

The protein resides in the plastid. The protein localises to the chloroplast. This is an uncharacterized protein from Saccharum hybrid (Sugarcane).